The primary structure comprises 221 residues: MSILTQEALLVRDALSVRGLENPLIELNINHKIRKRRIENHMRAIVHLLNLDLEHDSLLNTPKRIAKMYIEEIFSGLDYSNFPKIAIIQNTMQINEMITVRGINITSTCEHHFIVFNGKVTISYIPEKNVIGLSKINRIVQFFSKRPQLQERLTKQIFLALQTLLNTDNVAIFIDAVHYCVKARGIHDVSSTTTTTALGGLFESNTNTREEFLHAIMYCNH.

The Zn(2+) site is built by Cys-109, His-112, and Cys-180.

This sequence belongs to the GTP cyclohydrolase I family. In terms of assembly, toroid-shaped homodecamer, composed of two pentamers of five dimers.

The catalysed reaction is GTP + H2O = 7,8-dihydroneopterin 3'-triphosphate + formate + H(+). It functions in the pathway cofactor biosynthesis; 7,8-dihydroneopterin triphosphate biosynthesis; 7,8-dihydroneopterin triphosphate from GTP: step 1/1. This Blochmanniella pennsylvanica (strain BPEN) protein is GTP cyclohydrolase 1.